The chain runs to 389 residues: Arginine biosynthesis bifunctional protein ArgJ (389 aa).

6 residues coordinate substrate: Thr-150, Lys-173, Thr-184, Glu-263, Asn-384, and Thr-389. Thr-184 functions as the Nucleophile in the catalytic mechanism.

The protein belongs to the ArgJ family. In terms of assembly, heterotetramer of two alpha and two beta chains.

The protein resides in the cytoplasm. It catalyses the reaction N(2)-acetyl-L-ornithine + L-glutamate = N-acetyl-L-glutamate + L-ornithine. It carries out the reaction L-glutamate + acetyl-CoA = N-acetyl-L-glutamate + CoA + H(+). Its pathway is amino-acid biosynthesis; L-arginine biosynthesis; L-ornithine and N-acetyl-L-glutamate from L-glutamate and N(2)-acetyl-L-ornithine (cyclic): step 1/1. The protein operates within amino-acid biosynthesis; L-arginine biosynthesis; N(2)-acetyl-L-ornithine from L-glutamate: step 1/4. In terms of biological role, catalyzes two activities which are involved in the cyclic version of arginine biosynthesis: the synthesis of N-acetylglutamate from glutamate and acetyl-CoA as the acetyl donor, and of ornithine by transacetylation between N(2)-acetylornithine and glutamate. The chain is Arginine biosynthesis bifunctional protein ArgJ from Deinococcus radiodurans (strain ATCC 13939 / DSM 20539 / JCM 16871 / CCUG 27074 / LMG 4051 / NBRC 15346 / NCIMB 9279 / VKM B-1422 / R1).